The sequence spans 66 residues: uncharacterized protein (66 aa).

One can recognise an HTH cro/C1-type domain in the interval Val-5–Val-59. Positions Gln-16–Lys-35 form a DNA-binding region, H-T-H motif.

This is an uncharacterized protein from Bacillus subtilis (strain 168).